The chain runs to 128 residues: Cyclin-dependent protein kinase inhibitor SMR1 (128 aa).

The segment at 17 to 74 is disordered; the sequence is PIKIRSKTSKTKKDEGDDDEDDLRCSTPTSQEHKIPAVVDSPPPPPRKPRPPPSAPSA. Pro residues predominate over residues 57 to 71; that stretch reads SPPPPPRKPRPPPSA.

In terms of assembly, interacts with CDKB1-1. Interacts with CPR5. Expressed in roots, leaves, stems, siliques and flowers. Expressed in the root elongation zone.

It localises to the nucleus. Functionally, probable cyclin-dependent protein kinase (CDK) inhibitor that functions as a repressor of mitosis in the endoreduplication cell cycle. Cooperates with SIM and SMR2 to promote endoreplication during leaf development. Specifically regulates endoreduplication in epidermal pavement cells to produce the cell size pattern. Is necessary for giant cell formation. Positive regulator of effector-triggered immunity (ETI). The polypeptide is Cyclin-dependent protein kinase inhibitor SMR1 (Arabidopsis thaliana (Mouse-ear cress)).